A 293-amino-acid chain; its full sequence is Formamidopyrimidine-DNA glycosylase (293 aa).

Residue proline 2 is the Schiff-base intermediate with DNA of the active site. The active-site Proton donor is glutamate 3. Lysine 58 (proton donor; for beta-elimination activity) is an active-site residue. Positions 104, 123, and 166 each coordinate DNA. The FPG-type zinc-finger motif lies at 257–293 (QVYDREGEPCRTDGCGGVVKRFVQNGRSTFWCPKCQR). Arginine 283 (proton donor; for delta-elimination activity) is an active-site residue.

This sequence belongs to the FPG family. As to quaternary structure, monomer. Zn(2+) serves as cofactor.

The catalysed reaction is Hydrolysis of DNA containing ring-opened 7-methylguanine residues, releasing 2,6-diamino-4-hydroxy-5-(N-methyl)formamidopyrimidine.. It catalyses the reaction 2'-deoxyribonucleotide-(2'-deoxyribose 5'-phosphate)-2'-deoxyribonucleotide-DNA = a 3'-end 2'-deoxyribonucleotide-(2,3-dehydro-2,3-deoxyribose 5'-phosphate)-DNA + a 5'-end 5'-phospho-2'-deoxyribonucleoside-DNA + H(+). In terms of biological role, involved in base excision repair of DNA damaged by oxidation or by mutagenic agents. Acts as a DNA glycosylase that recognizes and removes damaged bases. Has a preference for oxidized purines, such as 7,8-dihydro-8-oxoguanine (8-oxoG). Has AP (apurinic/apyrimidinic) lyase activity and introduces nicks in the DNA strand. Cleaves the DNA backbone by beta-delta elimination to generate a single-strand break at the site of the removed base with both 3'- and 5'-phosphates. The sequence is that of Formamidopyrimidine-DNA glycosylase from Bradyrhizobium sp. (strain BTAi1 / ATCC BAA-1182).